We begin with the raw amino-acid sequence, 320 residues long: ATP-dependent 6-phosphofructokinase (320 aa).

G12 lines the ATP pocket. An ADP-binding site is contributed by 22 to 26 (RGVVR). ATP-binding positions include 73–74 (RF) and 103–106 (GDGS). D104 contributes to the Mg(2+) binding site. Residue 126–128 (TID) coordinates substrate. D128 acts as the Proton acceptor in catalysis. R155 is a binding site for ADP. Residues R163 and 170-172 (MGR) each bind substrate. ADP-binding positions include 186 to 188 (GCE), K212, and 214 to 216 (KKH). Substrate-binding positions include E223, R244, and 250–253 (HIQR).

This sequence belongs to the phosphofructokinase type A (PFKA) family. ATP-dependent PFK group I subfamily. Prokaryotic clade 'B1' sub-subfamily. Homotetramer. Mg(2+) is required as a cofactor.

It localises to the cytoplasm. It catalyses the reaction beta-D-fructose 6-phosphate + ATP = beta-D-fructose 1,6-bisphosphate + ADP + H(+). Its pathway is carbohydrate degradation; glycolysis; D-glyceraldehyde 3-phosphate and glycerone phosphate from D-glucose: step 3/4. Allosterically activated by ADP and other diphosphonucleosides, and allosterically inhibited by phosphoenolpyruvate. Its function is as follows. Catalyzes the phosphorylation of D-fructose 6-phosphate to fructose 1,6-bisphosphate by ATP, the first committing step of glycolysis. The polypeptide is ATP-dependent 6-phosphofructokinase (Edwardsiella ictaluri (strain 93-146)).